A 505-amino-acid polypeptide reads, in one-letter code: Prenylcysteine oxidase 1 (505 aa).

The first 27 residues, 1–27, serve as a signal peptide directing secretion; sequence MGRVVAELVSSLLGLWLLLCSCGCPEG. Asparagine 196, asparagine 323, and asparagine 353 each carry an N-linked (GlcNAc...) asparagine glycan.

It belongs to the prenylcysteine oxidase family. FAD serves as cofactor. Widely expressed.

It is found in the lysosome. It catalyses the reaction an S-polyprenyl-L-cysteine + O2 + H2O = a polyprenal + L-cysteine + H2O2. It carries out the reaction S-(2E,6E)-farnesyl-L-cysteine + O2 + H2O = (2E,6E)-farnesal + L-cysteine + H2O2. The catalysed reaction is [(2E,6E,10E)-geranylgeranyl]-L-cysteine + O2 + H2O = (2E,6E,10E)-geranylgeranial + L-cysteine + H2O2. Its function is as follows. Prenylcysteine oxidase that cleaves the thioether bond of prenyl-L-cysteines, such as farnesylcysteine and geranylgeranylcysteine. Only active against free prenylcysteines and not prenylcysteine residues within prenylated proteins or peptides. Involved in the final step in the degradation of prenylated proteins, by degrading prenylcysteines after the protein has been degraded. This chain is Prenylcysteine oxidase 1, found in Homo sapiens (Human).